The sequence spans 440 residues: Trigger factor (440 aa).

One can recognise a PPIase FKBP-type domain in the interval 162 to 247; sequence GDRVTFDFTG…LKKIEKFQLP (86 aa).

The protein belongs to the FKBP-type PPIase family. Tig subfamily.

The protein resides in the cytoplasm. The enzyme catalyses [protein]-peptidylproline (omega=180) = [protein]-peptidylproline (omega=0). Involved in protein export. Acts as a chaperone by maintaining the newly synthesized protein in an open conformation. Functions as a peptidyl-prolyl cis-trans isomerase. This chain is Trigger factor, found in Hamiltonella defensa subsp. Acyrthosiphon pisum (strain 5AT).